Reading from the N-terminus, the 414-residue chain is N-carbamoyl-L-amino-acid amidohydrolase (414 aa).

A divalent metal cation is bound by residues histidine 83, aspartate 94, glutamate 129, and histidine 195. The an N-carbamoyl-L-alpha-amino acid site is built by glutamine 198, histidine 231, asparagine 281, arginine 294, and glycine 363. Residues 214-333 form an involved in dimerization region; it reads GIAGPSWFKV…QIEKNMAAVP (120 aa). Residue histidine 388 coordinates a divalent metal cation.

Belongs to the peptidase M20 family. As to quaternary structure, homodimer. It depends on Mn(2+) as a cofactor. The cofactor is Ni(2+). Co(2+) is required as a cofactor. Requires Fe(2+) as cofactor.

The enzyme catalyses an N-carbamoyl-L-alpha-amino acid + H2O + 2 H(+) = an L-alpha-amino acid + NH4(+) + CO2. It carries out the reaction N-carbamoyl-L-methionine + H2O + 2 H(+) = L-methionine + NH4(+) + CO2. Catalyzes the hydrolysis of N-carbamoyl-L-alpha-amino acids to free L-alpha-amino acids. Is strictly L-specific since it is inactive toward N-carbamoyl-D-alpha-amino acids. The protein is N-carbamoyl-L-amino-acid amidohydrolase of Pseudomonas sp. (strain NS671).